We begin with the raw amino-acid sequence, 299 residues long: Deoxyhypusine hydroxylase (299 aa).

5 HEAT-like PBS-type repeats span residues 54 to 80, 87 to 113, 174 to 200, 205 to 231, and 238 to 264; these read LKHELAFCLGQMRDRAAIPALLGVLQD, VRHEAGEALGAIGDPEVLDVLRRYSED, DRYRAMFALRNLGGRDAVLALADGLRA, FRHEIGYVLGQMQDEACVPQLTAALRS, and VRHECAEALGSIARPSCLETLRAFAQD. The Fe cation site is built by His56, His89, and Glu90. Positions 207, 240, and 241 each coordinate Fe cation.

This sequence belongs to the deoxyhypusine hydroxylase family. Fe(2+) serves as cofactor.

The enzyme catalyses [eIF5A protein]-deoxyhypusine + AH2 + O2 = [eIF5A protein]-hypusine + A + H2O. It participates in protein modification; eIF5A hypusination. In terms of biological role, catalyzes the hydroxylation of the N(6)-(4-aminobutyl)-L-lysine intermediate produced by deoxyhypusine synthase/DHPS on a critical lysine of the eukaryotic translation initiation factor 5A/eIF-5A. This is the second step of the post-translational modification of that lysine into an unusual amino acid residue named hypusine. Hypusination is unique to mature eIF-5A factor and is essential for its function. In Gallus gallus (Chicken), this protein is Deoxyhypusine hydroxylase.